The sequence spans 388 residues: Succinate--CoA ligase [ADP-forming] subunit beta (388 aa).

The ATP-grasp domain maps to Lys-9–Lys-245. Residues Lys-46, Gly-53–Gly-55, Glu-100, Tyr-103, and Glu-108 each bind ATP. Asn-200 and Asp-214 together coordinate Mg(2+). Substrate contacts are provided by residues Asn-265 and Gly-322–Val-324.

Belongs to the succinate/malate CoA ligase beta subunit family. Heterotetramer of two alpha and two beta subunits. It depends on Mg(2+) as a cofactor.

It catalyses the reaction succinate + ATP + CoA = succinyl-CoA + ADP + phosphate. The enzyme catalyses GTP + succinate + CoA = succinyl-CoA + GDP + phosphate. Its pathway is carbohydrate metabolism; tricarboxylic acid cycle; succinate from succinyl-CoA (ligase route): step 1/1. Functionally, succinyl-CoA synthetase functions in the citric acid cycle (TCA), coupling the hydrolysis of succinyl-CoA to the synthesis of either ATP or GTP and thus represents the only step of substrate-level phosphorylation in the TCA. The beta subunit provides nucleotide specificity of the enzyme and binds the substrate succinate, while the binding sites for coenzyme A and phosphate are found in the alpha subunit. In Neisseria meningitidis serogroup A / serotype 4A (strain DSM 15465 / Z2491), this protein is Succinate--CoA ligase [ADP-forming] subunit beta.